A 338-amino-acid polypeptide reads, in one-letter code: Tryptophan--tRNA ligase (338 aa).

Residues 18–20 and 26–27 contribute to the ATP site; these read QPS and GN. Positions 19–27 match the 'HIGH' region motif; sequence PSGNLTIGN. Asp142 serves as a coordination point for L-tryptophan. ATP is bound by residues 154–156, Ile193, and 202–206; these read GND and KMSKS. Positions 202-206 match the 'KMSKS' region motif; it reads KMSKS.

It belongs to the class-I aminoacyl-tRNA synthetase family. In terms of assembly, homodimer.

It localises to the cytoplasm. The catalysed reaction is tRNA(Trp) + L-tryptophan + ATP = L-tryptophyl-tRNA(Trp) + AMP + diphosphate + H(+). Functionally, catalyzes the attachment of tryptophan to tRNA(Trp). The chain is Tryptophan--tRNA ligase from Clostridium tetani (strain Massachusetts / E88).